The primary structure comprises 113 residues: Ribonuclease P protein component (113 aa).

Basic residues predominate over residues 1–10 (MLPTRHRMRT). The tract at residues 1–23 (MLPTRHRMRTSAHFSTTVRSGAR) is disordered.

Belongs to the RnpA family. In terms of assembly, consists of a catalytic RNA component (M1 or rnpB) and a protein subunit.

It carries out the reaction Endonucleolytic cleavage of RNA, removing 5'-extranucleotides from tRNA precursor.. Its function is as follows. RNaseP catalyzes the removal of the 5'-leader sequence from pre-tRNA to produce the mature 5'-terminus. It can also cleave other RNA substrates such as 4.5S RNA. The protein component plays an auxiliary but essential role in vivo by binding to the 5'-leader sequence and broadening the substrate specificity of the ribozyme. In Kocuria rhizophila (strain ATCC 9341 / DSM 348 / NBRC 103217 / DC2201), this protein is Ribonuclease P protein component.